A 185-amino-acid polypeptide reads, in one-letter code: HTH-type transcriptional regulator Hpr (185 aa).

The HTH marR-type domain occupies 13–157; that stretch reads AMIFSQRIAQ…LIAILRNIYG (145 aa). The H-T-H motif DNA-binding region spans 63 to 86; it reads ISEIAKFGVMHVSTAFNFSKKLEE.

Homodimer.

Negative regulator of protease production and sporulation. The chain is HTH-type transcriptional regulator Hpr from Bacillus cytotoxicus (strain DSM 22905 / CIP 110041 / 391-98 / NVH 391-98).